The following is a 74-amino-acid chain: Complement C5a anaphylatoxin (74 aa).

The segment at 15-44 (YAMLKKCCYDGAYRNDDETCEERAARIKIG) is involved in C5AR1 binding. Cystine bridges form between Cys-21–Cys-47, Cys-22–Cys-54, and Cys-34–Cys-55. One can recognise an Anaphylatoxin-like domain in the interval 21–55 (CCYDGAYRNDDETCEERAARIKIGPKCVKAFKDCC). The segment at 72–74 (LGR) is required for 90% of C5a activity; although Arg-74 is not essential.

The protein resides in the secreted. Its function is as follows. Mediator of local inflammatory process released following cleavage by C5 convertase. Acts by binding to its receptor (C5AR1 or C5AR2), activating G protein-coupled receptor signaling and inducing a variety of responses including intracellular calcium release, contraction of smooth muscle, increased vascular permeability, and histamine release from mast cells and basophilic leukocytes. C5a is also a potent chemokine which stimulates the locomotion of polymorphonuclear leukocytes and directs their migration toward sites of inflammation. The polypeptide is Complement C5a anaphylatoxin (C5) (Sus scrofa (Pig)).